A 262-amino-acid chain; its full sequence is Serine/arginine-rich SC35-like splicing factor SCL30 (262 aa).

Residues 1–14 (MRRYSPPYYSPPRR) show a composition bias toward low complexity. 2 disordered regions span residues 1–48 (MRRY…SHGS) and 123–262 (ASES…VSPR). Residues Ser-5, Ser-10, and Ser-22 each carry the phosphoserine modification. Residues 31 to 42 (GYGGGGGGGGRR) are compositionally biased toward gly residues. Residues 47 to 125 (GSLLVRNIPL…REITVVVASE (79 aa)) enclose the RRM domain. Over residues 125–152 (ESRKRPEEMRVKTRTRSREPSGSRDRSH) the composition is skewed to basic and acidic residues. A compositionally biased stretch (basic residues) spans 153 to 167 (GRSRSRSISRSRSPR). Ser-182, Ser-204, and Ser-206 each carry phosphoserine. Tyr-209 is modified (phosphotyrosine). The segment covering 217 to 239 (PDRDRNGDNEIREKPGYEAEDRR) has biased composition (basic and acidic residues). Positions 243–262 (RAVSRSPSGSRSRSVEVSPR) are enriched in low complexity. A phosphoserine mark is found at Ser-254, Ser-256, and Ser-260.

This sequence belongs to the splicing factor SR family. SCL subfamily. As to quaternary structure, component of the spliceosome. Interacts with RS2Z33, CYP59, CYP63 and CYP95. Post-translationally, phosphorylated.

Its subcellular location is the nucleus speckle. Involved in intron recognition and spliceosome assembly. Probably active at the 5' splice sites. This is Serine/arginine-rich SC35-like splicing factor SCL30 (SCL30) from Arabidopsis thaliana (Mouse-ear cress).